The chain runs to 103 residues: Small ribosomal subunit protein uS10c (103 aa).

This sequence belongs to the universal ribosomal protein uS10 family. Part of the 30S ribosomal subunit.

It localises to the plastid. It is found in the chloroplast. Its function is as follows. Involved in the binding of tRNA to the ribosomes. This Trieres chinensis (Marine centric diatom) protein is Small ribosomal subunit protein uS10c.